The primary structure comprises 128 residues: MPTINQLVRKERKKVLEKSKSPALKNCPQRRGVCTRVYTTTPKKPNSALRKVAKVRLTSGFEVISYIGGEGHNLQEHSIVLVRGGRVKDLPGVKYHIVRGALDTAGVAKRTVSRSKYGAKRPKAGTAK.

The residue at position 89 (Asp-89) is a 3-methylthioaspartic acid.

The protein belongs to the universal ribosomal protein uS12 family. As to quaternary structure, part of the 30S ribosomal subunit. Contacts proteins S8 and S17. May interact with IF1 in the 30S initiation complex.

Its function is as follows. With S4 and S5 plays an important role in translational accuracy. Functionally, interacts with and stabilizes bases of the 16S rRNA that are involved in tRNA selection in the A site and with the mRNA backbone. Located at the interface of the 30S and 50S subunits, it traverses the body of the 30S subunit contacting proteins on the other side and probably holding the rRNA structure together. The combined cluster of proteins S8, S12 and S17 appears to hold together the shoulder and platform of the 30S subunit. The protein is Small ribosomal subunit protein uS12 of Campylobacter jejuni subsp. jejuni serotype O:6 (strain 81116 / NCTC 11828).